We begin with the raw amino-acid sequence, 262 residues long: Electron transfer flavoprotein beta subunit lysine methyltransferase (262 aa).

A mitochondrion-targeting transit peptide spans methionine 1–glycine 38.

The protein belongs to the methyltransferase superfamily. ETFBKMT family. As to quaternary structure, interacts with HSPD1; this protein may possibly be a methylation substrate.

It localises to the cytoplasm. The protein localises to the mitochondrion matrix. The catalysed reaction is L-lysyl-[protein] + 3 S-adenosyl-L-methionine = N(6),N(6),N(6)-trimethyl-L-lysyl-[protein] + 3 S-adenosyl-L-homocysteine + 3 H(+). Functionally, protein-lysine methyltransferase that selectively trimethylates the flavoprotein ETFB in mitochondria. Thereby, may negatively regulate the function of ETFB in electron transfer from Acyl-CoA dehydrogenases to the main respiratory chain. This is Electron transfer flavoprotein beta subunit lysine methyltransferase from Homo sapiens (Human).